Here is a 276-residue protein sequence, read N- to C-terminus: NAD kinase (276 aa).

The Proton acceptor role is filled by Asp67. NAD(+) contacts are provided by residues Asp67–Gly68, Arg72, Asn136–Asp137, Lys147, Arg164, Asp166, Thr177–Ser182, Ala201, and Gln235.

This sequence belongs to the NAD kinase family. The cofactor is a divalent metal cation.

The protein localises to the cytoplasm. It carries out the reaction NAD(+) + ATP = ADP + NADP(+) + H(+). Functionally, involved in the regulation of the intracellular balance of NAD and NADP, and is a key enzyme in the biosynthesis of NADP. Catalyzes specifically the phosphorylation on 2'-hydroxyl of the adenosine moiety of NAD to yield NADP. The chain is NAD kinase from Thermococcus sibiricus (strain DSM 12597 / MM 739).